A 969-amino-acid polypeptide reads, in one-letter code: Poly(ADP-ribose) glycohydrolase (969 aa).

3 disordered regions span residues 1 to 149 (MSAG…QQQT), 161 to 341 (HAEQ…CQAR), and 368 to 400 (NNAG…GKRD). The tract at residues 1-449 (MSAGPGWEPC…LPPEKKWLGT (449 aa)) is A-domain. Residues 10–16 (CTKRPRW) carry the Nuclear localization signal motif. Positions 69–84 (NATSFVFKQKTITTWM) are enriched in polar residues. Positions 77–84 (QKTITTWM) match the PIP-box (PCNA interacting peptide) motif. Residues 87–100 (KGPKTAESESKENN) show a composition bias toward basic and acidic residues. The span at 101–113 (NTRIDSMMSSVQK) shows a compositional bias: polar residues. A compositionally biased stretch (basic and acidic residues) spans 116–125 (FYPHKVEKLE). 2 stretches are compositionally biased toward polar residues: residues 128–149 (PQLN…QQQT) and 179–189 (QLSNANIGQSP). Phosphoserine is present on S135. The residue at position 137 (T137) is a Phosphothreonine. A compositionally biased stretch (basic and acidic residues) spans 190–205 (HTDDHSDTDHEEDRDN). S195 is modified (phosphoserine). T197 is modified (phosphothreonine). Residues 226 to 237 (ARSNCKCSGSRQ) are compositionally biased toward polar residues. A phosphoserine mark is found at S256, S259, S281, S286, S293, S297, and S311. The segment covering 275-284 (KLTGQESSLG) has biased composition (polar residues). Over residues 311–325 (SEADEETSPVFDEQD) the composition is skewed to acidic residues. Composition is skewed to polar residues over residues 329–339 (SQTANKLSSCQ) and 369–387 (NAGT…SSLN). Residue K334 is modified to N6-acetyllysine. Residues 603-788 (QPIPLLKQKM…TEQYSEYTGY (186 aa)) form a catalytic region. Residue 719 to 720 (IE) coordinates substrate. The active site involves D730. 2 residues coordinate substrate: N733 and Q747. Catalysis depends on residues E748 and E749. Residues Y788 and 862–867 (NWGCGA) each bind substrate.

The protein belongs to the poly(ADP-ribose) glycohydrolase family. In terms of assembly, interacts with PCNA. Interacts with NUDT5.

It is found in the nucleus. The enzyme catalyses [(1''-&gt;2')-ADP-alpha-D-ribose](n) + H2O = [(1''-&gt;2')-ADP-alpha-D-ribose](n-1) + ADP-D-ribose. Its function is as follows. Poly(ADP-ribose) glycohydrolase that degrades poly(ADP-ribose) by hydrolyzing the ribose-ribose bonds present in poly(ADP-ribose). PARG acts both as an endo- and exoglycosidase, releasing poly(ADP-ribose) of different length as well as ADP-ribose monomers. It is however unable to cleave the ester bond between the terminal ADP-ribose and ADP-ribosylated residues, leaving proteins that are mono-ADP-ribosylated. Poly(ADP-ribose) is synthesized after DNA damage is only present transiently and is rapidly degraded by PARG. Required to prevent detrimental accumulation of poly(ADP-ribose) upon prolonged replicative stress, while it is not required for recovery from transient replicative stress. Responsible for the prevalence of mono-ADP-ribosylated proteins in cells, thanks to its ability to degrade poly(ADP-ribose) without cleaving the terminal protein-ribose bond. Required for retinoid acid-dependent gene transactivation, probably by removing poly(ADP-ribose) from histone demethylase KDM4D, allowing chromatin derepression at RAR-dependent gene promoters. Involved in the synthesis of ATP in the nucleus, together with PARP1, NMNAT1 and NUDT5. Nuclear ATP generation is required for extensive chromatin remodeling events that are energy-consuming. This Mus musculus (Mouse) protein is Poly(ADP-ribose) glycohydrolase.